Consider the following 212-residue polypeptide: Golgi-associated RAB2 interactor protein 5A (212 aa).

2 disordered regions span residues 1–21 (MKGGRDLKAARGGADRPLAPA) and 162–212 (PFTH…LWGL). The segment covering 169 to 185 (APEEEEEEEEEEEEEEV) has biased composition (acidic residues).

The protein belongs to the GARIN family. In terms of assembly, interacts (via N-terminus) with RAB2B (in GTP-bound form). As to expression, expressed in testis (at protein level).

It is found in the golgi apparatus. RAB2B effector protein which promotes cytosolic DNA-induced innate immune responses. Regulates IFN responses against DNA viruses by regulating the CGAS-STING signaling axis. This chain is Golgi-associated RAB2 interactor protein 5A, found in Mus musculus (Mouse).